Consider the following 664-residue polypeptide: Exoribonuclease 2 (664 aa).

In terms of domain architecture, RNB spans Arg-193–Ile-521. One can recognise an S1 motif domain in the interval Gln-568–Thr-650.

Belongs to the RNR ribonuclease family. RNase II subfamily.

It localises to the cytoplasm. The enzyme catalyses Exonucleolytic cleavage in the 3'- to 5'-direction to yield nucleoside 5'-phosphates.. In terms of biological role, involved in mRNA degradation. Hydrolyzes single-stranded polyribonucleotides processively in the 3' to 5' direction. This chain is Exoribonuclease 2, found in Vibrio vulnificus (strain CMCP6).